A 421-amino-acid chain; its full sequence is 3-phosphoshikimate 1-carboxyvinyltransferase (421 aa).

3-phosphoshikimate-binding residues include Lys19, Ser20, and Arg24. Phosphoenolpyruvate is bound at residue Lys19. 2 residues coordinate phosphoenolpyruvate: Gly88 and Arg116. The 3-phosphoshikimate site is built by Ser160, Gln162, Asp307, and Lys334. Gln162 serves as a coordination point for phosphoenolpyruvate. The Proton acceptor role is filled by Asp307. Phosphoenolpyruvate contacts are provided by Arg338 and Arg380.

This sequence belongs to the EPSP synthase family. Monomer.

It is found in the cytoplasm. It carries out the reaction 3-phosphoshikimate + phosphoenolpyruvate = 5-O-(1-carboxyvinyl)-3-phosphoshikimate + phosphate. The protein operates within metabolic intermediate biosynthesis; chorismate biosynthesis; chorismate from D-erythrose 4-phosphate and phosphoenolpyruvate: step 6/7. Catalyzes the transfer of the enolpyruvyl moiety of phosphoenolpyruvate (PEP) to the 5-hydroxyl of shikimate-3-phosphate (S3P) to produce enolpyruvyl shikimate-3-phosphate and inorganic phosphate. This Thermotoga sp. (strain RQ2) protein is 3-phosphoshikimate 1-carboxyvinyltransferase.